The primary structure comprises 117 residues: UPF0102 protein FTN_0424 (117 aa).

The protein belongs to the UPF0102 family.

The protein is UPF0102 protein FTN_0424 of Francisella tularensis subsp. novicida (strain U112).